The chain runs to 524 residues: Cytochrome P450 4F11 (524 aa).

The helical transmembrane segment at Ala-15–Trp-37 threads the bilayer. Residues Cys-45 and Cys-260 each carry the 4-hydroxynonenal-conjugated cysteine modification. His-261 is subject to 4-hydroxynonenal-conjugated histidine. A heme-binding site is contributed by Glu-328. A 4-hydroxynonenal-conjugated histidine modification is found at His-347. Cys-354 carries the 4-hydroxynonenal-conjugated cysteine modification. Lys-451 bears the 4-hydroxynonenal-conjugated lysine mark. Cys-468 lines the heme pocket.

The protein belongs to the cytochrome P450 family. It depends on heme as a cofactor. 4-hydroxynonenal conjugation impairs substrate binding and the long-chain fatty acid omega-monooxygenase activity. Expressed mainly in human liver, followed by kidney, heart, and skeletal muscle.

It is found in the endoplasmic reticulum membrane. The protein resides in the microsome membrane. The catalysed reaction is an organic molecule + reduced [NADPH--hemoprotein reductase] + O2 = an alcohol + oxidized [NADPH--hemoprotein reductase] + H2O + H(+). It carries out the reaction an omega-methyl-long-chain fatty acid + reduced [NADPH--hemoprotein reductase] + O2 = an omega-hydroxy-long-chain fatty acid + oxidized [NADPH--hemoprotein reductase] + H2O + H(+). It catalyses the reaction dodecanoate + reduced [NADPH--hemoprotein reductase] + O2 = 12-hydroxydodecanoate + oxidized [NADPH--hemoprotein reductase] + H2O + H(+). The enzyme catalyses hexadecanoate + reduced [NADPH--hemoprotein reductase] + O2 = 16-hydroxyhexadecanoate + oxidized [NADPH--hemoprotein reductase] + H2O + H(+). The catalysed reaction is (9Z)-octadecenoate + reduced [NADPH--hemoprotein reductase] + O2 = 18-hydroxy-(9Z)-octadecenoate + oxidized [NADPH--hemoprotein reductase] + H2O + H(+). It carries out the reaction (5Z,8Z,11Z,14Z)-eicosatetraenoate + reduced [NADPH--hemoprotein reductase] + O2 = 20-hydroxy-(5Z,8Z,11Z,14Z)-eicosatetraenoate + oxidized [NADPH--hemoprotein reductase] + H2O + H(+). It catalyses the reaction (4Z,7Z,10Z,13Z,16Z,19Z)-docosahexaenoate + reduced [NADPH--hemoprotein reductase] + O2 = 22-hydroxy-(4Z,7Z,10Z,13Z,16Z,19Z)-docosahexaenoate + oxidized [NADPH--hemoprotein reductase] + H2O + H(+). The enzyme catalyses 8-hydroxy-(5Z,9E,11Z,14Z)-eicosatetraenoate + reduced [NADPH--hemoprotein reductase] + O2 = 8,20-dihydroxy-(5Z,9E,11Z,14Z)-eicosatetraenoate + oxidized [NADPH--hemoprotein reductase] + H2O + H(+). The catalysed reaction is 3-hydroxyhexadecanoate + reduced [NADPH--hemoprotein reductase] + O2 = 3,16-dihydroxyhexadecanoate + oxidized [NADPH--hemoprotein reductase] + H2O + H(+). It carries out the reaction 3-hydroxyoctadecanoate + reduced [NADPH--hemoprotein reductase] + O2 = 3,18-dihydroxyoctadecanoate + oxidized [NADPH--hemoprotein reductase] + H2O + H(+). It catalyses the reaction phylloquinone + reduced [NADPH--hemoprotein reductase] + O2 = omega-hydroxyphylloquinone + oxidized [NADPH--hemoprotein reductase] + H2O + H(+). The enzyme catalyses menaquinone-4 + reduced [NADPH--hemoprotein reductase] + O2 = omega-hydroxymenaquinone-4 + oxidized [NADPH--hemoprotein reductase] + H2O + H(+). The catalysed reaction is 2-hexyl-5-pentylresorcinol + reduced [NADPH--hemoprotein reductase] + O2 = 2-hexyl-5-(5-hydroxypentyl)resorcinol + oxidized [NADPH--hemoprotein reductase] + H2O + H(+). It carries out the reaction 2-hexyl-5-heptylresorcinol + reduced [NADPH--hemoprotein reductase] + O2 = 2-hexyl-5-(7-hydroxyheptyl)resorcinol + oxidized [NADPH--hemoprotein reductase] + H2O + H(+). It catalyses the reaction 12-hydroxy-(5Z,8Z,10E,14Z)-eicosatetraenoate + reduced [NADPH--hemoprotein reductase] + O2 = 12,20-dihydroxy-(5Z,8Z,10E,14Z)-eicosatetraenoate + oxidized [NADPH--hemoprotein reductase] + H2O + H(+). The enzyme catalyses 15-hydroxy-(5Z,8Z,11Z,13E)-eicosatetraenoate + reduced [NADPH--hemoprotein reductase] + O2 = 15,20-dihydroxy-(5Z,8Z,11Z,13E)-eicosatetraenoate + oxidized [NADPH--hemoprotein reductase] + H2O + H(+). It participates in lipid metabolism; arachidonate metabolism. It functions in the pathway lipid metabolism; oxylipin biosynthesis. The protein operates within cofactor degradation; phylloquinone degradation. Its pathway is xenobiotic degradation. Inhibition of the long-chain fatty acid omega-monooxygenase activity by 4-hydroxynonenal (4-HNE) conjugation. Functionally, a cytochrome P450 monooxygenase involved in the metabolism of various endogenous substrates, including fatty acids and their oxygenated derivatives (oxylipins). Mechanistically, uses molecular oxygen inserting one oxygen atom into a substrate, and reducing the second into a water molecule, with two electrons provided by NADPH via cytochrome P450 reductase (CPR; NADPH-ferrihemoprotein reductase). Catalyzes with high efficiency the oxidation of the terminal carbon (omega-oxidation) of 3-hydroxy fatty acids, such as 3-hydroxyhexadecanoic and 3-hydroxyoctadecanoic acids, likely participating in the biosynthesis of long-chain 3-hydroxydicarboxylic acids. Omega-hydroxylates and inactivates phylloquinone (vitamin K1), and menaquinone-4 (MK-4, a form of vitamin K2), both acting as cofactors in blood coagulation. Metabolizes with low efficiciency fatty acids, including (5Z,8Z,11Z,14Z)-eicosatetraenoic acid (arachidonate) and its oxygenated metabolite 8-hydroxyeicosatetraenoic acid (8-HETE). Catalyzes N- and O-demethylation of drugs such as erythromycin, benzphetamine, ethylmorphine, chlorpromazine, imipramine and verapamil. Catalyzes the oxidation of dialkylresorcinol 2. This chain is Cytochrome P450 4F11, found in Homo sapiens (Human).